The primary structure comprises 521 residues: Proactivator polypeptide-like 1 (521 aa).

A signal peptide spans Met-1–Ala-17. Positions Ser-18 to Ala-59 are excised as a propeptide. The Saposin A-type 1 domain occupies Pro-19–Ala-59. 2 Saposin B-type domains span residues Lys-60 to Gln-144 and Glu-180 to Gly-258. 3 cysteine pairs are disulfide-bonded: Cys-64–Cys-140, Cys-67–Cys-134, and Cys-95–Cys-107. A propeptide spanning residues His-146 to Glu-180 is cleaved from the precursor. Cystine bridges form between Cys-184–Cys-254, Cys-187–Cys-248, and Cys-213–Cys-224. Asn-201 carries an N-linked (GlcNAc...) asparagine glycan. The propeptide occupies Ala-259–Met-288. Saposin B-type domains follow at residues Ala-290 to Arg-370 and Gln-392 to Arg-473. Cystine bridges form between Cys-294-Cys-366, Cys-297-Cys-360, and Cys-325-Cys-336. The N-linked (GlcNAc...) asparagine glycan is linked to Asn-311. Residues Arg-370–Asn-391 constitute a propeptide that is removed on maturation. Disulfide bonds link Cys-396-Cys-469, Cys-399-Cys-463, and Cys-427-Cys-438. The propeptide occupies Thr-474–Ala-521. The Saposin A-type 2 domain maps to Pro-475 to Leu-515.

Its subcellular location is the secreted. Its function is as follows. May activate the lysosomal degradation of sphingolipids. In Homo sapiens (Human), this protein is Proactivator polypeptide-like 1 (PSAPL1).